Here is a 714-residue protein sequence, read N- to C-terminus: Protein ESC8 (714 aa).

2 disordered regions span residues Ala598–Asn674 and Arg694–Leu714. Residues Thr610–Val624 are compositionally biased toward polar residues. Residues Val628–Ser650 show a composition bias toward acidic residues. The segment covering Thr654–Asn674 has biased composition (basic and acidic residues). The segment covering Arg704–Leu714 has biased composition (basic residues).

As to quaternary structure, interacts with GAL11 and SIR2.

It is found in the cytoplasm. Its subcellular location is the nucleus. Involved in HMR and telomere silencing via the recruitment or stabilizing of the SIR (silent information regulators) complex. The sequence is that of Protein ESC8 (ESC8) from Saccharomyces cerevisiae (strain ATCC 204508 / S288c) (Baker's yeast).